A 940-amino-acid chain; its full sequence is Chordin (940 aa).

The first 19 residues, 1-19 (MMEGLLWILLSVIIASVHG), serve as a signal peptide directing secretion. The 77-residue stretch at 42 to 118 (SGCSFGGRFY…LPGHCCKTCP (77 aa)) folds into the VWFC 1 domain. 4 consecutive CHRD domains span residues 162–277 (TTTD…KHRA), 279–398 (FAET…GRRS), 404–519 (SVLS…LLPY), and 525–652 (RRNE…VPNH). Asn-347 and Asn-430 each carry an N-linked (GlcNAc...) asparagine glycan. VWFC domains lie at 689-748 (HSCF…PICE), 767-836 (EGCY…KECP), and 855-919 (RLCK…PECI).

This sequence belongs to the chordin family. Interacts with twsg1 and/or bmp4. Post-translationally, cleaved by tolloid proteases; cleavage participates in dorsoventral patterning during early development.

It localises to the secreted. In terms of biological role, dorsalizing factor. Key developmental protein that dorsalizes early vertebrate embryonic tissues by binding to ventralizing TGF-beta family bone morphogenetic proteins (BMPs) and sequestering them in latent complexes. This is Chordin (chd) from Danio rerio (Zebrafish).